A 316-amino-acid chain; its full sequence is Acetyl-coenzyme A carboxylase carboxyl transferase subunit beta, chloroplastic (316 aa).

In terms of domain architecture, CoA carboxyltransferase N-terminal spans 47-316 (LWTRCDNCEN…CKKFQNSFFK (270 aa)). Residues cysteine 51, cysteine 54, cysteine 70, and cysteine 73 each contribute to the Zn(2+) site. A C4-type zinc finger spans residues 51-73 (CDNCENMLYVRFLRQNKRICEEC).

The protein belongs to the AccD/PCCB family. In terms of assembly, acetyl-CoA carboxylase is a heterohexamer composed of biotin carboxyl carrier protein, biotin carboxylase and 2 subunits each of ACCase subunit alpha and ACCase plastid-coded subunit beta (accD). The cofactor is Zn(2+).

Its subcellular location is the plastid. The protein resides in the chloroplast stroma. It catalyses the reaction N(6)-carboxybiotinyl-L-lysyl-[protein] + acetyl-CoA = N(6)-biotinyl-L-lysyl-[protein] + malonyl-CoA. It participates in lipid metabolism; malonyl-CoA biosynthesis; malonyl-CoA from acetyl-CoA: step 1/1. In terms of biological role, component of the acetyl coenzyme A carboxylase (ACC) complex. Biotin carboxylase (BC) catalyzes the carboxylation of biotin on its carrier protein (BCCP) and then the CO(2) group is transferred by the transcarboxylase to acetyl-CoA to form malonyl-CoA. This chain is Acetyl-coenzyme A carboxylase carboxyl transferase subunit beta, chloroplastic, found in Marchantia polymorpha (Common liverwort).